A 235-amino-acid chain; its full sequence is MKFSAPVLAIFLASASAQSTAELAAQIPSCAQTCLATAITGAGCTAGDYACQCGTSQNTITASATPCVISACTSEEALNTQRTTSQICALVAAGSASSPSASSSASASASSSASSTSGAASASASASSSASSASAAASALTLAHPIPNPSHPPSPTIQTNLRKKVRNSNRLTPASLSSVSSALVSSASSVRASASSAVSAATTAANPAATTAAGVKEEASFFIPAAVALFAVFAV.

A signal peptide spans Met-1 to Ala-17. The region spanning Gln-18–Ser-114 is the CFEM domain. 4 disulfide bridges follow: Cys-30–Cys-72, Cys-34–Cys-67, Cys-44–Cys-51, and Cys-53–Cys-88. Residue Asp-48 coordinates heme. Thr-211 carries GPI-anchor amidated threonine lipidation. Positions Ala-212–Val-235 are cleaved as a propeptide — removed in mature form.

This sequence belongs to the RBT5 family.

It is found in the cell membrane. The protein resides in the secreted. It localises to the host cytoplasm. Its subcellular location is the host nucleus. The protein localises to the host cell membrane. Appears to function during host infection, and may play a role in suppressing the host immune response. The sequence is that of Effector CFEM1 from Marssonina brunnea f. sp. multigermtubi (strain MB_m1) (Marssonina leaf spot fungus).